The following is a 542-amino-acid chain: Chitinase 1 (542 aa).

The 439-residue stretch at 68–506 (FNVLCYFTDW…NAAHEGLKRR (439 aa)) folds into the GH18 domain. Chitin contacts are provided by residues 186 to 187 (QE) and 213 to 216 (GGWS). Glutamate 256 (proton donor) is an active-site residue. Chitin-binding positions include tyrosine 257, 323–326 (MTYD), and tryptophan 486.

It belongs to the glycosyl hydrolase 18 family. As to quaternary structure, semipurified toxin complex consists of at least YenA1-YenA2-YenB-YenC1-YenC2-Chi1-Chi2. The Yen-TC:K9 subcomplex is about 26 nm tall and 22 nm in diameter with 5-fold symmetry and 5 copies of YenA1, YenA2, Chi1 and Chi2; the chitinase subunits may be solvent accessible on the exterior the complex. The Yen-TC:K9 subcomplex has no insecticidal activity. The native complex with additional YenB, YenC1 and YenC2 subunits is 16 nm taller and is insecticidal; the toxicity-conferring subunits are present at about 1 copy each.

It is found in the secreted. The enzyme catalyses Random endo-hydrolysis of N-acetyl-beta-D-glucosaminide (1-&gt;4)-beta-linkages in chitin and chitodextrins.. Its activity is regulated as follows. Toxin complex is secreted when grown at 25 degrees Celsius or less; at higher temperatures the proteins are present intracellularly but not secreted. Part of an orally active toxin complex (TC) with strong insecticidal effects on larvae of the Coleoptera Costelytra zealandica, Acrossidius tasmania and Adoryphorus couloni and some Lepidoptera larvae. The TC has an endochitinase activity. This subunit might aid infection by degradation of the larval peritrophic membrane. The polypeptide is Chitinase 1 (Yersinia entomophaga).